Consider the following 233-residue polypeptide: Glyceraldehyde 3-phosphate phosphatase (233 aa).

Belongs to the HAD-like hydrolase superfamily. Mg(2+) is required as a cofactor.

In terms of biological role, catalyzes the dephosphorylation of D,L-glyceraldehyde 3-phosphate in vitro. The polypeptide is Glyceraldehyde 3-phosphate phosphatase (Methanopyrus kandleri (strain AV19 / DSM 6324 / JCM 9639 / NBRC 100938)).